We begin with the raw amino-acid sequence, 396 residues long: Elongation factor Tu (396 aa).

A tr-type G domain is found at 10–206; it reads KPHVNVGTIG…ALDSYIPTPE (197 aa). The tract at residues 19-26 is G1; that stretch reads GHVDHGKT. 19-26 is a binding site for GTP; that stretch reads GHVDHGKT. T26 is a binding site for Mg(2+). Residues 60–64 are G2; that stretch reads GITIN. The tract at residues 81 to 84 is G3; it reads DCPG. GTP-binding positions include 81-85 and 136-139; these read DCPGH and NKCD. Positions 136–139 are G4; sequence NKCD. Positions 174–176 are G5; sequence SAL.

It belongs to the TRAFAC class translation factor GTPase superfamily. Classic translation factor GTPase family. EF-Tu/EF-1A subfamily. As to quaternary structure, monomer.

It is found in the cytoplasm. The catalysed reaction is GTP + H2O = GDP + phosphate + H(+). Functionally, GTP hydrolase that promotes the GTP-dependent binding of aminoacyl-tRNA to the A-site of ribosomes during protein biosynthesis. In Aromatoleum aromaticum (strain DSM 19018 / LMG 30748 / EbN1) (Azoarcus sp. (strain EbN1)), this protein is Elongation factor Tu.